The primary structure comprises 368 residues: Zinc finger protein 24 (368 aa).

Lys22 is covalently cross-linked (Glycyl lysine isopeptide (Lys-Gly) (interchain with G-Cter in SUMO2)). A Glycyl lysine isopeptide (Lys-Gly) (interchain with G-Cter in SUMO1); alternate cross-link involves residue Lys27. A Glycyl lysine isopeptide (Lys-Gly) (interchain with G-Cter in SUMO2); alternate cross-link involves residue Lys27. One can recognise an SCAN box domain in the interval Arg52 to Leu134. Phosphoserine is present on residues Ser132 and Ser142. Glycyl lysine isopeptide (Lys-Gly) (interchain with G-Cter in SUMO2) cross-links involve residues Lys147, Lys177, and Lys236. The C2H2-type 1 zinc finger occupies His251–His273. The necessary and sufficient for nuclear localization stretch occupies residues His251 to His301. Ser274 bears the Phosphoserine mark. Glycyl lysine isopeptide (Lys-Gly) (interchain with G-Cter in SUMO2) cross-links involve residues Lys277 and Lys286. 3 C2H2-type zinc fingers span residues Tyr279–His301, Tyr307–His329, and Tyr335–His357. Ser292 carries the phosphoserine modification. A Phosphotyrosine modification is found at Tyr335. Residues Lys361 and Lys367 each participate in a glycyl lysine isopeptide (Lys-Gly) (interchain with G-Cter in SUMO2) cross-link.

It belongs to the krueppel C2H2-type zinc-finger protein family. Post-translationally, sumoylated. As to expression, widely expressed with highest levels in heart, brain, liver, skeletal muscle, kidney and testis and very low levels in spleen and lung.

Its subcellular location is the nucleus. Transcription factor required for myelination of differentiated oligodendrocytes. Required for the conversion of oligodendrocytes from the premyelinating to the myelinating state. In the developing central nervous system (CNS), involved in the maintenance in the progenitor stage by promoting the cell cycle. Specifically binds to the 5'-TCAT-3' DNA sequence. Has transcription repressor activity in vitro. This Mus musculus (Mouse) protein is Zinc finger protein 24.